A 232-amino-acid chain; its full sequence is Large ribosomal subunit protein uL1 (232 aa).

Belongs to the universal ribosomal protein uL1 family. In terms of assembly, part of the 50S ribosomal subunit.

Its function is as follows. Binds directly to 23S rRNA. The L1 stalk is quite mobile in the ribosome, and is involved in E site tRNA release. In terms of biological role, protein L1 is also a translational repressor protein, it controls the translation of the L11 operon by binding to its mRNA. In Xanthomonas axonopodis pv. citri (strain 306), this protein is Large ribosomal subunit protein uL1.